Here is a 131-residue protein sequence, read N- to C-terminus: Small ribosomal subunit protein uS8 (131 aa).

It belongs to the universal ribosomal protein uS8 family. In terms of assembly, part of the 30S ribosomal subunit. Contacts proteins S5 and S12.

In terms of biological role, one of the primary rRNA binding proteins, it binds directly to 16S rRNA central domain where it helps coordinate assembly of the platform of the 30S subunit. The sequence is that of Small ribosomal subunit protein uS8 from Nautilia profundicola (strain ATCC BAA-1463 / DSM 18972 / AmH).